A 132-amino-acid chain; its full sequence is Aspartate 1-decarboxylase (132 aa).

Catalysis depends on Ser25, which acts as the Schiff-base intermediate with substrate; via pyruvic acid. The residue at position 25 (Ser25) is a Pyruvic acid (Ser). Thr57 is a substrate binding site. Tyr58 functions as the Proton donor in the catalytic mechanism. 73 to 75 contributes to the substrate binding site; it reads GAA.

The protein belongs to the PanD family. In terms of assembly, heterooctamer of four alpha and four beta subunits. Pyruvate is required as a cofactor. In terms of processing, is synthesized initially as an inactive proenzyme, which is activated by self-cleavage at a specific serine bond to produce a beta-subunit with a hydroxyl group at its C-terminus and an alpha-subunit with a pyruvoyl group at its N-terminus.

It localises to the cytoplasm. The catalysed reaction is L-aspartate + H(+) = beta-alanine + CO2. Its pathway is cofactor biosynthesis; (R)-pantothenate biosynthesis; beta-alanine from L-aspartate: step 1/1. Its function is as follows. Catalyzes the pyruvoyl-dependent decarboxylation of aspartate to produce beta-alanine. The sequence is that of Aspartate 1-decarboxylase from Pelotomaculum thermopropionicum (strain DSM 13744 / JCM 10971 / SI).